We begin with the raw amino-acid sequence, 122 residues long: Large ribosomal subunit protein uL14c (122 aa).

This sequence belongs to the universal ribosomal protein uL14 family. Part of the 50S ribosomal subunit.

Its subcellular location is the plastid. Functionally, binds to 23S rRNA. This Helicosporidium sp. subsp. Simulium jonesii (Green alga) protein is Large ribosomal subunit protein uL14c (rpl14).